The following is a 125-amino-acid chain: Glycine cleavage system H protein (125 aa).

A Lipoyl-binding domain is found at 22–104 (SYVIGITDFA…YDTGWILKLE (83 aa)). Lys63 carries the N6-lipoyllysine modification.

This sequence belongs to the GcvH family. In terms of assembly, the glycine cleavage system is composed of four proteins: P, T, L and H. Requires (R)-lipoate as cofactor.

The glycine cleavage system catalyzes the degradation of glycine. The H protein shuttles the methylamine group of glycine from the P protein to the T protein. Functionally, is also involved in protein lipoylation via its role as an octanoyl/lipoyl carrier protein intermediate. In Listeria monocytogenes serotype 4a (strain HCC23), this protein is Glycine cleavage system H protein.